A 174-amino-acid polypeptide reads, in one-letter code: Beta-lactoglobulin (174 aa).

Positions 1 to 18 are cleaved as a signal peptide; sequence MKFLLLTVGLTSICAIQA. 2 disulfide bridges follow: cysteine 79–cysteine 172 and cysteine 122–cysteine 134.

Belongs to the calycin superfamily. Lipocalin family. Monomer.

The protein resides in the secreted. In terms of biological role, lactoglobulin is the primary component of whey, it binds retinol and is probably involved in the transport of that molecule. This Trichosurus vulpecula (Brush-tailed possum) protein is Beta-lactoglobulin (LGB).